The sequence spans 115 residues: Con-Ins T1B (115 aa).

The first 24 residues, 1–24 (MTTSFYFLLMALGLLLYVCQSSFG), serve as a signal peptide directing secretion. The propeptide occupies 25–29 (NQHTR). Pro-34 is subject to 4-hydroxyproline; partial. Intrachain disulfides connect Cys-38–Cys-101, Cys-50–Cys-114, and Cys-100–Cys-105. The propeptide at 52–94 (RKRNDAGKKRGQASPLWQRGGSLSMLKARAKRNEAFHLQRAHR) is c peptide. The residue at position 98 (Glu-98) is a 4-carboxyglutamate. Pro-104 carries the post-translational modification 4-hydroxyproline; partial. 4-carboxyglutamate; partial is present on Glu-109. The residue at position 114 (Cys-114) is a Cysteine amide.

The protein belongs to the insulin family. Heterodimer of A and B chains; disulfide-linked. As to expression, expressed by the venom gland.

It is found in the secreted. Its function is as follows. This venom insulin, from a fish-hunting cone snail, facilitates prey capture by rapidly inducing hypoglycemic shock. It is one of the smallest known insulin found in nature and lacks the C-terminal segment of the B chain that, in human insulin, mediates engagement of the insulin receptor (INSR) and assembly of the hormone's hexameric storage form. Despite lacking this segment, it both binds and activates human insulin receptor (long isoform (HIR-B) of INSR) with a high potency (EC(50)=12.0 nM). In vivo, intraperitoneal injection of this peptide into zebrafish lowers blood glucose with a lower potency than human insulin. In addition, when applied to water, this peptide reduces overall locomotor activity of zebrafish larvae, observed as a significant decrease in the percentage of time spent swimming and movement frequency. When tested on a mouse model of diabetes, this insulin also lowers blood glucose with a 10-fold lower potency than human insulin. The protein is Con-Ins T1B of Conus tulipa (Fish-hunting cone snail).